We begin with the raw amino-acid sequence, 202 residues long: Ribonuclease HII (202 aa).

The region spanning 15 to 202 is the RNase H type-2 domain; the sequence is QGVAGVDEAG…APIKAFGISA (188 aa). Positions 21, 22, and 113 each coordinate a divalent metal cation.

This sequence belongs to the RNase HII family. Requires Mn(2+) as cofactor. Mg(2+) is required as a cofactor.

The protein resides in the cytoplasm. The enzyme catalyses Endonucleolytic cleavage to 5'-phosphomonoester.. In terms of biological role, endonuclease that specifically degrades the RNA of RNA-DNA hybrids. The protein is Ribonuclease HII of Bordetella avium (strain 197N).